A 156-amino-acid chain; its full sequence is uncharacterized protein (156 aa).

Residues 43-84 (LKIDENEVKLEISVEKLKNLSRVCENIEQVVDKVVEELRYAL) adopt a coiled-coil conformation.

This is an uncharacterized protein from Aquifex aeolicus (strain VF5).